The sequence spans 500 residues: MALRRLLLLLLLSLESLDLLPSVHGARGRAANRTLSAGGAAVGGRRAGGALARGGRELNGTARAPGIPEAGSRRGQPAAAVAAAASAAVTYETCWGYYDVSGQYDKEFECNNSESGYLYCCGTCYYRFCCKKRHEKLDQRQCTNYQSPVWVQTPSTKVVSPGPENKYDPEKDKTNFTVYITCGVIAFVIVAGVFAKVSYDKAHRPPREMNIHRALADILRQQGPIPIAHCERETISAIDTSPKENTPVRSSSKNHYTPVRTAKQTPEKPRMNNILTSATEPYDLSFSRSFQNLAHLPPSYESAVKTNPSKYSSLKRLTDKEADEYYMRRRHLPDLAARGTLPLNVIQMSQQKPLPRERPRRPIRAMSQDRVLSPDRGLPDEFSMPYDRILSDEQLLSTERLHSQDPLLSPERTAFPEQSLSRAISHTDVFVSTPVLDRYRMSKMHSHPSASNNSYATLGQSQTAAKRHAFASRRHNTVEQLHYIPGHHTCYTASKTEVTV.

An N-terminal signal peptide occupies residues 1-25; the sequence is MALRRLLLLLLLSLESLDLLPSVHG. At 26 to 174 the chain is on the extracellular side; sequence ARGRAANRTL…NKYDPEKDKT (149 aa). N-linked (GlcNAc...) asparagine glycosylation is found at N32 and N59. The tract at residues 52–73 is disordered; it reads ARGGRELNGTARAPGIPEAGSR. The helical transmembrane segment at 175–195 threads the bilayer; it reads NFTVYITCGVIAFVIVAGVFA. The Cytoplasmic segment spans residues 196 to 500; the sequence is KVSYDKAHRP…YTASKTEVTV (305 aa). The span at 240 to 255 shows a compositional bias: polar residues; sequence TSPKENTPVRSSSKNH. Disordered stretches follow at residues 240-269 and 349-378; these read TSPKENTPVRSSSKNHYTPVRTAKQTPEKP and SQQKPLPRERPRRPIRAMSQDRVLSPDRGL. A phosphoserine mark is found at S391, S397, and S409. T433 bears the Phosphothreonine mark. The tract at residues 444–470 is disordered; the sequence is MHSHPSASNNSYATLGQSQTAAKRHAF. A compositionally biased stretch (polar residues) spans 448–464; it reads PSASNNSYATLGQSQTA. Phosphothreonine is present on T477. Positions 497–500 match the PDZ-binding motif; that stretch reads EVTV.

This sequence belongs to the shisa family. In terms of assembly, component of the postsynaptic hippocampal AMPA-type glutamate receptor (AMPAR) complex, at least composed of pore forming AMPAR subunits GRIA1, GRIA2 and GRIA3 and AMPAR auxiliary proteins SHISA6 and SHISA7. Interacts (via PDZ-binding motif) with DLG4/PSD-95 (via PDZ domain); the interaction is direct. Expressed in the developing ventral mesencephalon.

It is found in the membrane. The protein resides in the postsynaptic density. In terms of biological role, involved in maintenance of high-frequency synaptic transmission at hippocampal CA3-CA1 synapses. Regulates AMPA-type glutamate receptor (AMPAR) immobilization at postsynaptic density keeping the channels in an activated state in the presence of glutamate and preventing synaptic depression. May play a role in self-renewal and differentiation of spermatogonial stem cells by inhibiting canonical Wnt signaling pathway. This chain is Protein shisa-6, found in Homo sapiens (Human).